We begin with the raw amino-acid sequence, 503 residues long: Variant surface glycoprotein ILTAT 1.3 (503 aa).

An N-terminal signal peptide occupies residues 1 to 29 (MTKAYENRMLLQALVLAAVLCTTHAEGTA). 2 cysteine pairs are disulfide-bonded: cysteine 42/cysteine 168 and cysteine 150/cysteine 206. Residues asparagine 419 and asparagine 432 are each glycosylated (N-linked (GlcNAc...) asparagine). Residue aspartate 480 is the site of GPI-anchor amidated aspartate attachment. Positions 481-503 (SSFILNKQFALSVVSAAFAALLF) are cleaved as a propeptide — removed in mature form.

Its subcellular location is the cell membrane. In terms of biological role, VSG forms a coat on the surface of the parasite. The trypanosome evades the immune response of the host by expressing a series of antigenically distinct VSGs from an estimated 1000 VSG genes. The sequence is that of Variant surface glycoprotein ILTAT 1.3 from Trypanosoma brucei brucei.